We begin with the raw amino-acid sequence, 386 residues long: Protein lin-8 (386 aa).

The tract at residues 175–285 (LGLEARRASK…FSQQYGGGGS (111 aa)) is sufficient for interaction with lin-35. The interval 212–240 (EEPYEETGSNWSDPAPEPSQSKSQSPEAK) is disordered. The segment covering 229-240 (PSQSKSQSPEAK) has biased composition (low complexity).

This sequence belongs to the lin-8 family. As to quaternary structure, interacts with lin-35 (via C-terminus). As to expression, widely expressed throughout development, with particularly prominent expression in the germline and in neuronal nuclei of the head (at protein level).

It localises to the nucleus. Functionally, acts as a synthetic multivulva class A (synMuvA) protein and redundantly inhibits lin-3/EGF expression to prevent inappropriate vulva induction. This is Protein lin-8 from Caenorhabditis elegans.